The primary structure comprises 294 residues: uncharacterized protein (294 aa).

Disordered stretches follow at residues 1–30 (MKRQ…EVSH), 51–86 (ALSD…KKRP), and 250–294 (DELN…STST). Polar residues-rich tracts occupy residues 7–26 (QDSM…TPTK), 66–81 (PYSS…NSST), and 255–277 (PMNN…NLPT).

The protein localises to the nucleus. This is an uncharacterized protein from Schizosaccharomyces pombe (strain 972 / ATCC 24843) (Fission yeast).